The primary structure comprises 387 residues: Succinate--CoA ligase [ADP-forming] subunit beta (387 aa).

ATP-binding positions include Lys-46, 53 to 55 (GRG), Glu-99, Ala-102, and Glu-107. The Mg(2+) site is built by Asn-199 and Asp-213. Substrate is bound by residues Asn-264 and 321-323 (GIV).

This sequence belongs to the succinate/malate CoA ligase beta subunit family. Heterotetramer of two alpha and two beta subunits. Mg(2+) serves as cofactor.

It carries out the reaction succinate + ATP + CoA = succinyl-CoA + ADP + phosphate. The catalysed reaction is GTP + succinate + CoA = succinyl-CoA + GDP + phosphate. Its pathway is carbohydrate metabolism; tricarboxylic acid cycle; succinate from succinyl-CoA (ligase route): step 1/1. Succinyl-CoA synthetase functions in the citric acid cycle (TCA), coupling the hydrolysis of succinyl-CoA to the synthesis of either ATP or GTP and thus represents the only step of substrate-level phosphorylation in the TCA. The beta subunit provides nucleotide specificity of the enzyme and binds the substrate succinate, while the binding sites for coenzyme A and phosphate are found in the alpha subunit. In Campylobacter jejuni subsp. jejuni serotype O:23/36 (strain 81-176), this protein is Succinate--CoA ligase [ADP-forming] subunit beta.